Reading from the N-terminus, the 603-residue chain is uncharacterized protein (603 aa).

The Ubiquitin-like domain occupies 4–79; the sequence is YRIRVTTVDQ…VTFHLVIAVF (76 aa). Disordered regions lie at residues 85–121, 159–178, and 206–348; these read TLPS…PEEL, SLPT…NSVS, and AQES…NQPF. Polar residues-rich tracts occupy residues 94-117 and 162-178; these read VPQS…TSLN and THEQ…NSVS. Residues 219-231 show a composition bias toward low complexity; sequence SSSSAPLASDQSP. The span at 246–264 shows a compositional bias: polar residues; it reads LGSNSGLNPRSPNSFSSPL. Residues 280–289 are compositionally biased toward low complexity; that stretch reads SLSPLSNSSS. The span at 290-314 shows a compositional bias: polar residues; it reads INQVHQNETHGSTISVPNPNLSQMG. A compositionally biased stretch (low complexity) spans 315–329; that stretch reads PSHSSSVPSNLSPNP. Residues 330–348 are compositionally biased toward polar residues; that stretch reads AQNENPSTTSIPSINNQPF. A helical membrane pass occupies residues 496–516; it reads ILLTSIMSVVFLLQTGALAPF. The disordered stretch occupies residues 544-578; the sequence is TAQRVVEIPNETQTEDEQDGTNTPDNRADAEEREL. Phosphothreonine is present on threonine 566. Residues 569–578 show a composition bias toward basic and acidic residues; it reads NRADAEEREL.

It is found in the endoplasmic reticulum membrane. This is an uncharacterized protein from Schizosaccharomyces pombe (strain 972 / ATCC 24843) (Fission yeast).